Consider the following 514-residue polypeptide: Maturase K (514 aa).

This sequence belongs to the intron maturase 2 family. MatK subfamily.

It is found in the plastid. It localises to the chloroplast. Its function is as follows. Usually encoded in the trnK tRNA gene intron. Probably assists in splicing its own and other chloroplast group II introns. The polypeptide is Maturase K (Phoenix dactylifera (Date palm)).